Consider the following 96-residue polypeptide: Co-chaperonin GroES (96 aa).

The protein belongs to the GroES chaperonin family. As to quaternary structure, heptamer of 7 subunits arranged in a ring. Interacts with the chaperonin GroEL.

The protein resides in the cytoplasm. Together with the chaperonin GroEL, plays an essential role in assisting protein folding. The GroEL-GroES system forms a nano-cage that allows encapsulation of the non-native substrate proteins and provides a physical environment optimized to promote and accelerate protein folding. GroES binds to the apical surface of the GroEL ring, thereby capping the opening of the GroEL channel. The chain is Co-chaperonin GroES from Nitrosomonas eutropha (strain DSM 101675 / C91 / Nm57).